A 174-amino-acid polypeptide reads, in one-letter code: Eukaryotic translation elongation factor 1 epsilon-1 (174 aa).

Ala2 is modified (N-acetylalanine). The tract at residues 2–56 (AAAAELRLLEKSLGLKPGNKYSAQGERQIPVLQTNNGPSLMGLSTIATHLVKQAS) is N-terminal. The region spanning 50–173 (HLVKQASKEH…FIKNRLYANS (124 aa)) is the GST C-terminal domain. The segment at 57 to 63 (KEHLLGS) is linker. Positions 64–152 (TAEEKAMVQQ…SRWFCHIQHY (89 aa)) are C-terminal. Lys138 carries the post-translational modification N6-acetyllysine. A coiled-coil region spans residues 153 to 169 (PDIRQHLSSIVFIKNRL).

In terms of assembly, part of a multisubunit complex that groups tRNA ligases for Arg (RARS1), Asp (DARS1), Gln (QARS1), Ile (IARS1), Leu (LARS1), Lys (KARS1), Met (MARS1) the bifunctional ligase for Glu and Pro (EPRS1) and the auxiliary subunits AIMP1/p43, AIMP2/p38 and EEF1E1/p18. Can interact simultaneously with MARS1 and EPRS1. Forms a linear complex that contains MARS1, EEF1E1, EPRS1 and AIMP2 that is at the core of the multisubunit complex. Interacts with ATM and ATR. The interaction with ATM, which takes place independently of TP53, is induced by DNA damage that may occur during genotoxic stress or cell growth. The interaction with ATR is enhanced by UV irradiation.

The protein resides in the cytoplasm. Its subcellular location is the nucleus. Positive modulator of ATM response to DNA damage. The polypeptide is Eukaryotic translation elongation factor 1 epsilon-1 (Eef1e1) (Mus musculus (Mouse)).